The primary structure comprises 395 residues: Elongation factor Tu (395 aa).

Residues 6-205 (KPHINVGTIG…NALEKIDLPI (200 aa)) enclose the tr-type G domain. Residues 15-22 (GHVDHGKT) are G1. 15 to 22 (GHVDHGKT) contributes to the GTP binding site. Mg(2+) is bound at residue Thr22. Residues 59–63 (GITIS) are G2. The tract at residues 80 to 83 (DCPG) is G3. Residues 80 to 84 (DCPGH) and 135 to 138 (NKCD) each bind GTP. A G4 region spans residues 135–138 (NKCD). The tract at residues 173 to 175 (SAV) is G5.

Belongs to the TRAFAC class translation factor GTPase superfamily. Classic translation factor GTPase family. EF-Tu/EF-1A subfamily. In terms of assembly, monomer.

Its subcellular location is the cytoplasm. The enzyme catalyses GTP + H2O = GDP + phosphate + H(+). In terms of biological role, GTP hydrolase that promotes the GTP-dependent binding of aminoacyl-tRNA to the A-site of ribosomes during protein biosynthesis. The protein is Elongation factor Tu of Ehrlichia ruminantium (strain Gardel).